The chain runs to 857 residues: Glucans biosynthesis glucosyltransferase H (857 aa).

Helical transmembrane passes span 142–162 (ILLT…KGIL), 196–216 (ILIL…TALM), 515–535 (VFLT…FLVL), 572–592 (LFST…ILIW), 606–626 (TLSM…RMIF), and 682–702 (FLWW…VSVI).

Belongs to the glycosyltransferase 2 family. OpgH subfamily.

The protein resides in the cell inner membrane. It participates in glycan metabolism; osmoregulated periplasmic glucan (OPG) biosynthesis. Involved in the biosynthesis of osmoregulated periplasmic glucans (OPGs). This is Glucans biosynthesis glucosyltransferase H from Pseudomonas putida (strain W619).